The chain runs to 60 residues: UPF0434 protein Bpro_2950 (60 aa).

It belongs to the UPF0434 family.

In Polaromonas sp. (strain JS666 / ATCC BAA-500), this protein is UPF0434 protein Bpro_2950.